The sequence spans 363 residues: Spermidine/putrescine import ATP-binding protein PotA (363 aa).

Positions 4–234 constitute an ABC transporter domain; sequence LELRNVIRRF…PANRFIADFI (231 aa). 36–43 is an ATP binding site; sequence GPSGCGKT.

This sequence belongs to the ABC transporter superfamily. Spermidine/putrescine importer (TC 3.A.1.11.1) family. The complex is composed of two ATP-binding proteins (PotA), two transmembrane proteins (PotB and PotC) and a solute-binding protein (PotD).

The protein localises to the cell inner membrane. It catalyses the reaction ATP + H2O + polyamine-[polyamine-binding protein]Side 1 = ADP + phosphate + polyamineSide 2 + [polyamine-binding protein]Side 1.. In terms of biological role, part of the ABC transporter complex PotABCD involved in spermidine/putrescine import. Responsible for energy coupling to the transport system. The chain is Spermidine/putrescine import ATP-binding protein PotA from Nitrosomonas eutropha (strain DSM 101675 / C91 / Nm57).